Here is a 117-residue protein sequence, read N- to C-terminus: MNVIDELEREQIETCKHTVPEFAPGDTVLVQVWVREGGRERVQPFEGVVIAKRKRGLNSSFTLRKTSHGEGVERVFQTYSPQIESIKVKRRGDVRQAKLYHLRELSGKAARIKEKIN.

This sequence belongs to the bacterial ribosomal protein bL19 family.

Functionally, this protein is located at the 30S-50S ribosomal subunit interface and may play a role in the structure and function of the aminoacyl-tRNA binding site. The chain is Large ribosomal subunit protein bL19 from Halorhodospira halophila (strain DSM 244 / SL1) (Ectothiorhodospira halophila (strain DSM 244 / SL1)).